A 77-amino-acid chain; its full sequence is Acyl carrier protein (77 aa).

The region spanning 1 to 75 is the Carrier domain; sequence MVFEKVKDII…DVVNYIKAHT (75 aa). O-(pantetheine 4'-phosphoryl)serine is present on Ser35.

Belongs to the acyl carrier protein (ACP) family. In terms of processing, 4'-phosphopantetheine is transferred from CoA to a specific serine of apo-ACP by AcpS. This modification is essential for activity because fatty acids are bound in thioester linkage to the sulfhydryl of the prosthetic group.

It localises to the cytoplasm. Its pathway is lipid metabolism; fatty acid biosynthesis. Its function is as follows. Carrier of the growing fatty acid chain in fatty acid biosynthesis. The sequence is that of Acyl carrier protein from Clostridium acetobutylicum (strain ATCC 824 / DSM 792 / JCM 1419 / IAM 19013 / LMG 5710 / NBRC 13948 / NRRL B-527 / VKM B-1787 / 2291 / W).